We begin with the raw amino-acid sequence, 257 residues long: Adenosylcobinamide-GDP ribazoletransferase (257 aa).

The next 6 helical transmembrane spans lie at 4–24 (AVRG…WWLG), 40–60 (VVGL…QWFF), 64–84 (FVVQ…LLHL), 116–136 (AAVA…AALL), 140–160 (AALA…ALLI), and 193–213 (LFVT…VVAV).

This sequence belongs to the CobS family. It depends on Mg(2+) as a cofactor.

The protein resides in the cell inner membrane. It catalyses the reaction alpha-ribazole + adenosylcob(III)inamide-GDP = adenosylcob(III)alamin + GMP + H(+). The catalysed reaction is alpha-ribazole 5'-phosphate + adenosylcob(III)inamide-GDP = adenosylcob(III)alamin 5'-phosphate + GMP + H(+). It functions in the pathway cofactor biosynthesis; adenosylcobalamin biosynthesis; adenosylcobalamin from cob(II)yrinate a,c-diamide: step 7/7. Functionally, joins adenosylcobinamide-GDP and alpha-ribazole to generate adenosylcobalamin (Ado-cobalamin). Also synthesizes adenosylcobalamin 5'-phosphate from adenosylcobinamide-GDP and alpha-ribazole 5'-phosphate. This chain is Adenosylcobinamide-GDP ribazoletransferase, found in Alkalilimnicola ehrlichii (strain ATCC BAA-1101 / DSM 17681 / MLHE-1).